We begin with the raw amino-acid sequence, 804 residues long: Elongation factor G, mitochondrial (804 aa).

A mitochondrion-targeting transit peptide spans 1 to 63; the sequence is MSMHRVARAV…RHFFQSPIIR (63 aa). A tr-type G domain is found at 99 to 385; it reads RRVRNIGIAA…AVCDYLPNPA (287 aa). GTP is bound by residues 108 to 115, 183 to 187, and 237 to 240; these read AHIDSGKT, DTPGH, and NKMD.

The protein belongs to the TRAFAC class translation factor GTPase superfamily. Classic translation factor GTPase family. EF-G/EF-2 subfamily.

The protein localises to the mitochondrion. The protein operates within protein biosynthesis; polypeptide chain elongation. Mitochondrial GTPase that catalyzes the GTP-dependent ribosomal translocation step during translation elongation. During this step, the ribosome changes from the pre-translocational (PRE) to the post-translocational (POST) state as the newly formed A-site-bound peptidyl-tRNA and P-site-bound deacylated tRNA move to the P and E sites, respectively. Catalyzes the coordinated movement of the two tRNA molecules, the mRNA and conformational changes in the ribosome. This is Elongation factor G, mitochondrial (mef1) from Sclerotinia sclerotiorum (strain ATCC 18683 / 1980 / Ss-1) (White mold).